Consider the following 169-residue polypeptide: NADH-quinone oxidoreductase subunit I (169 aa).

4Fe-4S ferredoxin-type domains lie at 60–90 and 100–129; these read LRRY…IEAE and TRYD…EGPN. C70, C73, C76, C80, C109, C112, C115, and C119 together coordinate [4Fe-4S] cluster.

This sequence belongs to the complex I 23 kDa subunit family. In terms of assembly, NDH-1 is composed of 14 different subunits. Subunits NuoA, H, J, K, L, M, N constitute the membrane sector of the complex. The cofactor is [4Fe-4S] cluster.

It localises to the cell membrane. The catalysed reaction is a quinone + NADH + 5 H(+)(in) = a quinol + NAD(+) + 4 H(+)(out). NDH-1 shuttles electrons from NADH, via FMN and iron-sulfur (Fe-S) centers, to quinones in the respiratory chain. The immediate electron acceptor for the enzyme in this species is believed to be ubiquinone. Couples the redox reaction to proton translocation (for every two electrons transferred, four hydrogen ions are translocated across the cytoplasmic membrane), and thus conserves the redox energy in a proton gradient. The polypeptide is NADH-quinone oxidoreductase subunit I (Wolbachia pipientis wMel).